A 203-amino-acid polypeptide reads, in one-letter code: Dual-action ribosomal maturation protein DarP (203 aa).

Disordered regions lie at residues 1-31 (MTRKTRIQTIESAEPEVDENGYDRPSKSQLK) and 178-203 (NADGPPAQTDSEADDAQDDEDDDRDA). Over residues 21–31 (GYDRPSKSQLK) the composition is skewed to basic and acidic residues. Acidic residues predominate over residues 188 to 203 (SEADDAQDDEDDDRDA).

It belongs to the DarP family.

It is found in the cytoplasm. Member of a network of 50S ribosomal subunit biogenesis factors which assembles along the 30S-50S interface, preventing incorrect 23S rRNA structures from forming. Promotes peptidyl transferase center (PTC) maturation. This is Dual-action ribosomal maturation protein DarP from Paraburkholderia xenovorans (strain LB400).